The chain runs to 491 residues: Protein SET DOMAIN GROUP 40 (491 aa).

Positions 36–278 (HSLSVSDFPD…LGEQVLLCYG (243 aa)) constitute an SET domain.

It belongs to the class V-like SAM-binding methyltransferase superfamily.

The protein is Protein SET DOMAIN GROUP 40 (SDG40) of Arabidopsis thaliana (Mouse-ear cress).